A 267-amino-acid polypeptide reads, in one-letter code: Diphthine--ammonia ligase (267 aa).

Position 97 is a phosphotyrosine (Tyr97).

Belongs to the Diphthine--ammonia ligase family.

It carries out the reaction diphthine-[translation elongation factor 2] + NH4(+) + ATP = diphthamide-[translation elongation factor 2] + AMP + diphosphate + H(+). It participates in protein modification; peptidyl-diphthamide biosynthesis. In terms of biological role, amidase that catalyzes the last step of diphthamide biosynthesis using ammonium and ATP. Diphthamide biosynthesis consists in the conversion of an L-histidine residue in the translation elongation factor eEF-2 (EEF2) to diphthamide. In Rattus norvegicus (Rat), this protein is Diphthine--ammonia ligase (Dph6).